Consider the following 353-residue polypeptide: Protein MGF 360-11L (353 aa).

Residues glutamate 59 to tyrosine 88 form an ANK repeat.

The protein belongs to the asfivirus MGF 360 family. In terms of assembly, interacts with host TBK1 ad IRF7.

Its function is as follows. Plays a role in virus cell tropism, and may be required for efficient virus replication in macrophages. In addition, inhibits the phosphorylation of host TBK1 and IRF7 and thereby negatively regulates the host cGAS signaling pathway and antagonizes IFN-mediated antiviral activity. This African swine fever virus (isolate Pig/Kenya/KEN-50/1950) (ASFV) protein is Protein MGF 360-11L.